A 785-amino-acid polypeptide reads, in one-letter code: Mitochondrial intermediate peptidase (785 aa).

The N-terminal 43 residues, 1–43, are a transit peptide targeting the mitochondrion; it reads MLTRPAQNALLKSMQPLFRFRGCLLAKSTSTPRRDISTSSRKL. Position 567 (His567) interacts with Zn(2+). Glu568 is an active-site residue. Positions 571 and 574 each coordinate Zn(2+).

The protein belongs to the peptidase M3 family. It depends on Zn(2+) as a cofactor.

It is found in the mitochondrion matrix. The enzyme catalyses Release of an N-terminal octapeptide as second stage of processing of some proteins imported into the mitochondrion.. Its function is as follows. Cleaves proteins, imported into the mitochondrion, to their mature size. While most mitochondrial precursor proteins are processed to the mature form in one step by mitochondrial processing peptidase (MPP), the sequential cleavage by MIP of an octapeptide after initial processing by MPP is a required step for a subgroup of nuclear-encoded precursor proteins destined for the matrix or the inner membrane. The sequence is that of Mitochondrial intermediate peptidase (OCT1) from Pleurotus djamor (Pink oyster mushroom).